A 379-amino-acid chain; its full sequence is Mating-type protein MAT-1 (379 aa).

The segment at residues 60-117 is a DNA-binding region (alpha box); the sequence is KARKALNAFVGFRCYYITIPMFKPWPMKKLSNLIGLLWEADPNKSLWSLMAKAWSTIR.

This sequence belongs to the MATALPHA1 family.

It localises to the nucleus. Functionally, mating type proteins are sequence specific DNA-binding proteins that act as master switches in fungal differentiation by controlling gene expression in a cell type-specific fashion. Transcriptional activator that induces the transcription of alpha-specific genes. The sequence is that of Mating-type protein MAT-1 (MAT1) from Cochliobolus carbonum (strain 26-R-13) (Maize leaf spot fungus).